A 71-amino-acid polypeptide reads, in one-letter code: Small ribosomal subunit protein bS18 (71 aa).

Belongs to the bacterial ribosomal protein bS18 family. Part of the 30S ribosomal subunit. Forms a tight heterodimer with protein bS6.

Functionally, binds as a heterodimer with protein bS6 to the central domain of the 16S rRNA, where it helps stabilize the platform of the 30S subunit. This is Small ribosomal subunit protein bS18 from Nostoc punctiforme (strain ATCC 29133 / PCC 73102).